The following is a 400-amino-acid chain: Acetate kinase (400 aa).

Asparagine 7 contributes to the Mg(2+) binding site. Lysine 14 contacts ATP. Residue arginine 91 participates in substrate binding. Aspartate 148 (proton donor/acceptor) is an active-site residue. ATP contacts are provided by residues 208–212 (HIGNG), 283–285 (DFR), and 332–336 (GIGEH). Mg(2+) is bound at residue glutamate 387.

This sequence belongs to the acetokinase family. In terms of assembly, homodimer. Requires Mg(2+) as cofactor. Mn(2+) serves as cofactor.

It is found in the cytoplasm. The enzyme catalyses acetate + ATP = acetyl phosphate + ADP. Its pathway is metabolic intermediate biosynthesis; acetyl-CoA biosynthesis; acetyl-CoA from acetate: step 1/2. Its function is as follows. Catalyzes the formation of acetyl phosphate from acetate and ATP. Can also catalyze the reverse reaction. The sequence is that of Acetate kinase from Clostridium beijerinckii (strain ATCC 51743 / NCIMB 8052) (Clostridium acetobutylicum).